A 142-amino-acid chain; its full sequence is Salivary protein 15a (142 aa).

Positions 1–20 (MKYLGLALISAVFLIGACQA) are cleaved as a signal peptide. Disulfide bonds link Cys27-Cys44, Cys40-Cys108, and Cys91-Cys117.

It belongs to the PBP/GOBP family. As to expression, female salivary gland (at protein level).

It localises to the secreted. Its function is as follows. Inhibits contact coagulation pathway activation in the host by sequestering anionic polymers, such as polyphosphate and dextran sulfate, and thus blocking interaction of protein components of the pathway with negatively charged surfaces. Inhibits dextran sulfate-mediated autoactivation of host coagulation factor XII (F12). Inhibits dextran sulfate-mediated autoactivation of host factor XI (F11). Inhibits polyphosphate-mediated activation of host F11 by thrombin (F2). May inhibit dextran sulfate-mediated bradykinin generation in host plasma. In Phlebotomus duboscqi (Sandfly), this protein is Salivary protein 15a.